A 374-amino-acid polypeptide reads, in one-letter code: uncharacterized protein (374 aa).

Residues 298 to 332 are a coiled coil; it reads TKEKLLKLHSEQKSLSEKINKLSGEKDIEQSMINN.

This is an uncharacterized protein from Acanthamoeba polyphaga (Amoeba).